Here is a 198-residue protein sequence, read N- to C-terminus: Guanylate kinase (198 aa).

Gly2 is modified (N-acetylglycine). In terms of domain architecture, Guanylate kinase-like spans Pro4–Ser186. Gly14–Thr19 is an ATP binding site. Residue Ser37–Lys51 coordinates substrate. Active-site residues include Arg44, Arg137, and Arg148. Asn171 to Asp172 serves as a coordination point for ATP.

This sequence belongs to the guanylate kinase family. Monomer. Interacts with RD3.

The protein localises to the photoreceptor inner segment. It localises to the cytoplasm. The protein resides in the cytosol. The catalysed reaction is GMP + ATP = GDP + ADP. Its activity is regulated as follows. Up-regulated by RD3. Functionally, catalyzes the phosphorylation of GMP to GDP. Essential enzyme for recycling GMP and indirectly, cyclic GMP (cGMP). Involved in the cGMP metabolism in photoreceptors. This Sus scrofa (Pig) protein is Guanylate kinase (GUK1).